A 389-amino-acid chain; its full sequence is Succinate--CoA ligase [ADP-forming] subunit beta (389 aa).

ATP-binding positions include lysine 46, 53-55, glutamate 99, cysteine 102, and glutamate 107; that span reads GRG. 2 residues coordinate Mg(2+): asparagine 199 and aspartate 213. Substrate is bound by residues asparagine 264 and 321-323; that span reads GIV.

This sequence belongs to the succinate/malate CoA ligase beta subunit family. Heterotetramer of two alpha and two beta subunits. Mg(2+) is required as a cofactor.

The enzyme catalyses succinate + ATP + CoA = succinyl-CoA + ADP + phosphate. It catalyses the reaction GTP + succinate + CoA = succinyl-CoA + GDP + phosphate. It participates in carbohydrate metabolism; tricarboxylic acid cycle; succinate from succinyl-CoA (ligase route): step 1/1. In terms of biological role, succinyl-CoA synthetase functions in the citric acid cycle (TCA), coupling the hydrolysis of succinyl-CoA to the synthesis of either ATP or GTP and thus represents the only step of substrate-level phosphorylation in the TCA. The beta subunit provides nucleotide specificity of the enzyme and binds the substrate succinate, while the binding sites for coenzyme A and phosphate are found in the alpha subunit. This is Succinate--CoA ligase [ADP-forming] subunit beta from Haemophilus influenzae (strain 86-028NP).